Here is a 327-residue protein sequence, read N- to C-terminus: uncharacterized protein (327 aa).

The segment at 12 to 31 is disordered; that stretch reads PLGTTKSYHMNTSTVSPPSP. A run of 2 helical transmembrane segments spans residues 183–203 and 292–312; these read VSSP…PVIL and VGVG…GLLM.

Its subcellular location is the membrane. This is an uncharacterized protein from Arabidopsis thaliana (Mouse-ear cress).